A 327-amino-acid chain; its full sequence is Thiamine-binding periplasmic protein (327 aa).

The N-terminal stretch at 1–18 (MLKKYLPLLLLCAAPAFA) is a signal peptide. Residues 59-60 (DG), 161-162 (ST), W197, and 215-218 (YTTS) contribute to the thiamine site.

It belongs to the bacterial solute-binding protein 1 family. In terms of assembly, the complex is composed of two ATP-binding proteins (ThiQ), two transmembrane proteins (ThiP) and a solute-binding protein (ThiB).

The protein resides in the periplasm. Its function is as follows. Part of the ABC transporter complex ThiBPQ involved in thiamine import. Is also involved in thiamine pyrophosphate transport. This Salmonella typhimurium (strain LT2 / SGSC1412 / ATCC 700720) protein is Thiamine-binding periplasmic protein.